We begin with the raw amino-acid sequence, 569 residues long: Proline--tRNA ligase (569 aa).

It belongs to the class-II aminoacyl-tRNA synthetase family. ProS type 1 subfamily. In terms of assembly, homodimer.

The protein resides in the cytoplasm. It carries out the reaction tRNA(Pro) + L-proline + ATP = L-prolyl-tRNA(Pro) + AMP + diphosphate. Catalyzes the attachment of proline to tRNA(Pro) in a two-step reaction: proline is first activated by ATP to form Pro-AMP and then transferred to the acceptor end of tRNA(Pro). As ProRS can inadvertently accommodate and process non-cognate amino acids such as alanine and cysteine, to avoid such errors it has two additional distinct editing activities against alanine. One activity is designated as 'pretransfer' editing and involves the tRNA(Pro)-independent hydrolysis of activated Ala-AMP. The other activity is designated 'posttransfer' editing and involves deacylation of mischarged Ala-tRNA(Pro). The misacylated Cys-tRNA(Pro) is not edited by ProRS. The sequence is that of Proline--tRNA ligase from Legionella pneumophila (strain Paris).